Here is a 40-residue protein sequence, read N- to C-terminus: Photosystem II reaction center protein J (40 aa).

Residues 8–28 (IPLWLIGTVTGIAVIGLIGVF) traverse the membrane as a helical segment.

This sequence belongs to the PsbJ family. PSII is composed of 1 copy each of membrane proteins PsbA, PsbB, PsbC, PsbD, PsbE, PsbF, PsbH, PsbI, PsbJ, PsbK, PsbL, PsbM, PsbT, PsbX, PsbY, PsbZ, Psb30/Ycf12, at least 3 peripheral proteins of the oxygen-evolving complex and a large number of cofactors. It forms dimeric complexes.

It is found in the plastid. The protein localises to the chloroplast thylakoid membrane. Its function is as follows. One of the components of the core complex of photosystem II (PSII). PSII is a light-driven water:plastoquinone oxidoreductase that uses light energy to abstract electrons from H(2)O, generating O(2) and a proton gradient subsequently used for ATP formation. It consists of a core antenna complex that captures photons, and an electron transfer chain that converts photonic excitation into a charge separation. The chain is Photosystem II reaction center protein J from Oryza nivara (Indian wild rice).